Here is a 340-residue protein sequence, read N- to C-terminus: Cathepsin B (340 aa).

An N-terminal signal peptide occupies residues 1–17 (MSWSRSILCLLGAFANA). Positions 18–79 (RSIPYYPPLS…ERVDFAEDMD (62 aa)) are cleaved as a propeptide — activation peptide. The N-linked (GlcNAc...) asparagine glycan is linked to asparagine 38. Intrachain disulfides connect cysteine 93–cysteine 122, cysteine 105–cysteine 150, cysteine 141–cysteine 208, cysteine 142–cysteine 146, cysteine 179–cysteine 212, and cysteine 187–cysteine 198. Cysteine 108 is a catalytic residue. Asparagine 192 carries an N-linked (GlcNAc...) asparagine glycan. Residues histidine 279 and asparagine 299 contribute to the active site.

Belongs to the peptidase C1 family. In terms of assembly, dimer of a heavy chain and a light chain cross-linked by a disulfide bond.

It localises to the lysosome. The catalysed reaction is Hydrolysis of proteins with broad specificity for peptide bonds. Preferentially cleaves -Arg-Arg-|-Xaa bonds in small molecule substrates (thus differing from cathepsin L). In addition to being an endopeptidase, shows peptidyl-dipeptidase activity, liberating C-terminal dipeptides.. Thiol protease which is believed to participate in intracellular degradation and turnover of proteins. Has also been implicated in tumor invasion and metastasis. The chain is Cathepsin B (CTSB) from Gallus gallus (Chicken).